The chain runs to 393 residues: 2-nitroimidazole transporter (393 aa).

The Cytoplasmic portion of the chain corresponds to 1–12 (MTCSTSLSGKNR). The helical transmembrane segment at 13–33 (IVLIAGILMIATTLRVTFTGA) threads the bilayer. Residues 34–52 (APLLDTIRSAYSLTTAQTG) lie on the Periplasmic side of the membrane. Residues 53–73 (LLTTLPLLAFALISPLAAPVA) traverse the membrane as a helical segment. The Cytoplasmic portion of the chain corresponds to 74–80 (RRFGMER). 2 consecutive transmembrane segments (helical) span residues 81 to 101 (SLFA…LPSP) and 102 to 122 (YLLF…NVLL). At 123 to 140 (PGLIKRDFPHSVARLTGA) the chain is on the cytoplasmic side. The helical transmembrane segment at 141 to 161 (YSLTMGAAAALGSAMVVPLAL) threads the bilayer. The Periplasmic portion of the chain corresponds to 162-163 (NG). The chain crosses the membrane as a helical span at residues 164-184 (FGWQGALLMLMCFPLLALFLW). At 185–218 (LPQWRSQQHANLSTSRALHTRGIWRSPLAWQVTL) the chain is on the cytoplasmic side. Residues 219–239 (FLGINSLVYYVIIGWLPAILI) traverse the membrane as a helical segment. Topologically, residues 240-249 (SHGYSEAQAG) are periplasmic. Residues 250–270 (SLHGLLQLATAAPGLLIPLFL) traverse the membrane as a helical segment. The Cytoplasmic segment spans residues 271 to 278 (HHVKDQRG). A helical membrane pass occupies residues 279-299 (IAAFVALMCAVGAVGLCFMPA). The Periplasmic portion of the chain corresponds to 300–304 (HAITW). Residues 305-325 (TLLFGFGSGATMILGLTFIGL) traverse the membrane as a helical segment. Topologically, residues 326–334 (RASSAHQAA) are cytoplasmic. Residues 335–355 (ALSGMAQSVGYLLAACGPPLM) form a helical membrane-spanning segment. Residues 356–366 (GKIHDANGNWS) lie on the Periplasmic side of the membrane. A helical membrane pass occupies residues 367 to 387 (VPLMGVAILSLLMAIFGLCAG). Residues 388 to 393 (RDKEIR) lie on the Cytoplasmic side of the membrane.

This sequence belongs to the major facilitator superfamily. Cyanate porter (TC 2.A.1.17) family.

The protein resides in the cell inner membrane. Its function is as follows. Involved in efflux of 2-nitroimidazole. The polypeptide is 2-nitroimidazole transporter (Escherichia coli (strain K12)).